The primary structure comprises 184 residues: Shikimate kinase (184 aa).

Gly15–Ser20 is an ATP binding site. Position 19 (Thr19) interacts with Mg(2+). Positions 37, 61, and 83 each coordinate substrate. Arg123 contributes to the ATP binding site. Arg142 is a substrate binding site.

Belongs to the shikimate kinase family. As to quaternary structure, monomer. Mg(2+) serves as cofactor.

The protein resides in the cytoplasm. The enzyme catalyses shikimate + ATP = 3-phosphoshikimate + ADP + H(+). The protein operates within metabolic intermediate biosynthesis; chorismate biosynthesis; chorismate from D-erythrose 4-phosphate and phosphoenolpyruvate: step 5/7. Catalyzes the specific phosphorylation of the 3-hydroxyl group of shikimic acid using ATP as a cosubstrate. This is Shikimate kinase from Coxiella burnetii (strain CbuK_Q154) (Coxiella burnetii (strain Q154)).